The primary structure comprises 339 residues: Nicotinate-nucleotide--dimethylbenzimidazole phosphoribosyltransferase (339 aa).

E306 acts as the Proton acceptor in catalysis.

It belongs to the CobT family.

It carries out the reaction 5,6-dimethylbenzimidazole + nicotinate beta-D-ribonucleotide = alpha-ribazole 5'-phosphate + nicotinate + H(+). Its pathway is nucleoside biosynthesis; alpha-ribazole biosynthesis; alpha-ribazole from 5,6-dimethylbenzimidazole: step 1/2. Catalyzes the synthesis of alpha-ribazole-5'-phosphate from nicotinate mononucleotide (NAMN) and 5,6-dimethylbenzimidazole (DMB). The chain is Nicotinate-nucleotide--dimethylbenzimidazole phosphoribosyltransferase from Brucella melitensis biotype 1 (strain ATCC 23456 / CCUG 17765 / NCTC 10094 / 16M).